The chain runs to 141 residues: Nucleoside diphosphate kinase (141 aa).

ATP contacts are provided by lysine 11, phenylalanine 59, arginine 87, threonine 93, arginine 104, and asparagine 114. The active-site Pros-phosphohistidine intermediate is the histidine 117.

This sequence belongs to the NDK family. In terms of assembly, homotetramer. Mg(2+) serves as cofactor.

Its subcellular location is the cytoplasm. It carries out the reaction a 2'-deoxyribonucleoside 5'-diphosphate + ATP = a 2'-deoxyribonucleoside 5'-triphosphate + ADP. The enzyme catalyses a ribonucleoside 5'-diphosphate + ATP = a ribonucleoside 5'-triphosphate + ADP. Functionally, major role in the synthesis of nucleoside triphosphates other than ATP. The ATP gamma phosphate is transferred to the NDP beta phosphate via a ping-pong mechanism, using a phosphorylated active-site intermediate. The chain is Nucleoside diphosphate kinase from Cupriavidus taiwanensis (strain DSM 17343 / BCRC 17206 / CCUG 44338 / CIP 107171 / LMG 19424 / R1) (Ralstonia taiwanensis (strain LMG 19424)).